The following is an 87-amino-acid chain: Cobalt transport protein CbiN (87 aa).

The next 2 membrane-spanning stretches (helical) occupy residues 4–24 and 58–78; these read LLLLLILLIFAAKVTAEEWAG and MLFSLQAAIGSLIIGYFLGYY.

It belongs to the CbiN family. As to quaternary structure, forms an energy-coupling factor (ECF) transporter complex composed of an ATP-binding protein (A component, CbiO), a transmembrane protein (T component, CbiQ) and 2 possible substrate-capture proteins (S components, CbiM and CbiN) of unknown stoichimetry.

Its subcellular location is the cell membrane. It participates in cofactor biosynthesis; adenosylcobalamin biosynthesis. In terms of biological role, part of the energy-coupling factor (ECF) transporter complex CbiMNOQ involved in cobalt import. The sequence is that of Cobalt transport protein CbiN from Archaeoglobus fulgidus (strain ATCC 49558 / DSM 4304 / JCM 9628 / NBRC 100126 / VC-16).